The chain runs to 159 residues: 6,7-dimethyl-8-ribityllumazine synthase (159 aa).

Residues W26, 58–60, and 80–82 each bind 5-amino-6-(D-ribitylamino)uracil; these read SFE and VVI. A (2S)-2-hydroxy-3-oxobutyl phosphate-binding site is contributed by 85-86; that stretch reads GT. H88 acts as the Proton donor in catalysis. F113 is a 5-amino-6-(D-ribitylamino)uracil binding site. Position 127 (R127) interacts with (2S)-2-hydroxy-3-oxobutyl phosphate.

The protein belongs to the DMRL synthase family.

The enzyme catalyses (2S)-2-hydroxy-3-oxobutyl phosphate + 5-amino-6-(D-ribitylamino)uracil = 6,7-dimethyl-8-(1-D-ribityl)lumazine + phosphate + 2 H2O + H(+). Its pathway is cofactor biosynthesis; riboflavin biosynthesis; riboflavin from 2-hydroxy-3-oxobutyl phosphate and 5-amino-6-(D-ribitylamino)uracil: step 1/2. In terms of biological role, catalyzes the formation of 6,7-dimethyl-8-ribityllumazine by condensation of 5-amino-6-(D-ribitylamino)uracil with 3,4-dihydroxy-2-butanone 4-phosphate. This is the penultimate step in the biosynthesis of riboflavin. This chain is 6,7-dimethyl-8-ribityllumazine synthase, found in Renibacterium salmoninarum (strain ATCC 33209 / DSM 20767 / JCM 11484 / NBRC 15589 / NCIMB 2235).